The following is a 359-amino-acid chain: Pyruvate dehydrogenase E1 component subunit beta, mitochondrial (359 aa).

The transit peptide at 1-19 (MLGVIRNKTIRPSFSAFRF) directs the protein to the mitochondrion. Glutamate 82 serves as a coordination point for thiamine diphosphate. 4 residues coordinate K(+): isoleucine 135, alanine 183, isoleucine 184, and aspartate 186.

Tetramer of 2 alpha and 2 beta subunits. Requires thiamine diphosphate as cofactor.

Its subcellular location is the mitochondrion matrix. The catalysed reaction is N(6)-[(R)-lipoyl]-L-lysyl-[protein] + pyruvate + H(+) = N(6)-[(R)-S(8)-acetyldihydrolipoyl]-L-lysyl-[protein] + CO2. Its function is as follows. The pyruvate dehydrogenase complex catalyzes the overall conversion of pyruvate to acetyl-CoA and CO(2). It contains multiple copies of three enzymatic components: pyruvate dehydrogenase (E1), dihydrolipoamide acetyltransferase (E2) and lipoamide dehydrogenase (E3). The polypeptide is Pyruvate dehydrogenase E1 component subunit beta, mitochondrial (Pisum sativum (Garden pea)).